A 304-amino-acid polypeptide reads, in one-letter code: UDP-3-O-acyl-N-acetylglucosamine deacetylase (304 aa).

Zn(2+) contacts are provided by histidine 79, histidine 238, and aspartate 242. Histidine 265 (proton donor) is an active-site residue.

The protein belongs to the LpxC family. Requires Zn(2+) as cofactor.

It catalyses the reaction a UDP-3-O-[(3R)-3-hydroxyacyl]-N-acetyl-alpha-D-glucosamine + H2O = a UDP-3-O-[(3R)-3-hydroxyacyl]-alpha-D-glucosamine + acetate. It functions in the pathway glycolipid biosynthesis; lipid IV(A) biosynthesis; lipid IV(A) from (3R)-3-hydroxytetradecanoyl-[acyl-carrier-protein] and UDP-N-acetyl-alpha-D-glucosamine: step 2/6. Its function is as follows. Catalyzes the hydrolysis of UDP-3-O-myristoyl-N-acetylglucosamine to form UDP-3-O-myristoylglucosamine and acetate, the committed step in lipid A biosynthesis. The protein is UDP-3-O-acyl-N-acetylglucosamine deacetylase of Pseudoalteromonas atlantica (strain T6c / ATCC BAA-1087).